A 236-amino-acid chain; its full sequence is Ribose-5-phosphate isomerase A (236 aa).

Substrate-binding positions include 33 to 36, 90 to 93, and 103 to 106; these read TGST, DGAD, and KGGG. Glu112 (proton acceptor) is an active-site residue. Lys130 serves as a coordination point for substrate.

Belongs to the ribose 5-phosphate isomerase family. In terms of assembly, homodimer.

The enzyme catalyses aldehydo-D-ribose 5-phosphate = D-ribulose 5-phosphate. It functions in the pathway carbohydrate degradation; pentose phosphate pathway; D-ribose 5-phosphate from D-ribulose 5-phosphate (non-oxidative stage): step 1/1. Catalyzes the reversible conversion of ribose-5-phosphate to ribulose 5-phosphate. This Trichormus variabilis (strain ATCC 29413 / PCC 7937) (Anabaena variabilis) protein is Ribose-5-phosphate isomerase A.